The following is a 162-amino-acid chain: MSDKIGLFTGSFDPMTNGHLDIIERASRLFDKLYVGIFFNPHKQGFLPIENRKRGLEKALGHLENVEVVASHDELVVDVAKRLGATFLVRGLRNASDLQYEASFDYYNHQLSSDIETIYLHSRPEHLYISSSGVRELLKFGQDIACYVPESILEEIRNEKKD.

Ser11 contacts substrate. ATP-binding positions include 11 to 12 (SF) and His19. Positions 43, 76, and 90 each coordinate substrate. Residues 91–93 (GLR), Glu101, and 126–132 (HLYISSS) contribute to the ATP site.

Belongs to the bacterial CoaD family. Homohexamer. The cofactor is Mg(2+).

It is found in the cytoplasm. The enzyme catalyses (R)-4'-phosphopantetheine + ATP + H(+) = 3'-dephospho-CoA + diphosphate. Its pathway is cofactor biosynthesis; coenzyme A biosynthesis; CoA from (R)-pantothenate: step 4/5. In terms of biological role, reversibly transfers an adenylyl group from ATP to 4'-phosphopantetheine, yielding dephospho-CoA (dPCoA) and pyrophosphate. This is Phosphopantetheine adenylyltransferase from Streptococcus pneumoniae (strain Taiwan19F-14).